A 98-amino-acid polypeptide reads, in one-letter code: Alpha-elicitin hibernalin (98 aa).

3 cysteine pairs are disulfide-bonded: Cys-3–Cys-71, Cys-27–Cys-56, and Cys-51–Cys-95.

The protein resides in the secreted. In terms of biological role, induces local and distal defense responses (incompatible hypersensitive reaction) in plants from the solanaceae and cruciferae families. Elicits leaf necrosis and causes the accumulation of pathogenesis-related proteins. Might interact with the lipidic molecules of the plasma membrane. This Phytophthora hibernalis protein is Alpha-elicitin hibernalin.